The primary structure comprises 177 residues: Small ribosomal subunit protein bS21m (177 aa).

Residues 1–17 (MLKSTLRLSRISLRRGF) constitute a mitochondrion transit peptide.

It belongs to the bacterial ribosomal protein bS21 family. In terms of assembly, component of the mitochondrial small ribosomal subunit (mt-SSU). Mature yeast 74S mitochondrial ribosomes consist of a small (37S) and a large (54S) subunit. The 37S small subunit contains a 15S ribosomal RNA (15S mt-rRNA) and 34 different proteins. The 54S large subunit contains a 21S rRNA (21S mt-rRNA) and 46 different proteins.

It is found in the mitochondrion. Functionally, component of the mitochondrial ribosome (mitoribosome), a dedicated translation machinery responsible for the synthesis of mitochondrial genome-encoded proteins, including at least some of the essential transmembrane subunits of the mitochondrial respiratory chain. The mitoribosomes are attached to the mitochondrial inner membrane and translation products are cotranslationally integrated into the membrane. The protein is Small ribosomal subunit protein bS21m (MRP21) of Saccharomyces cerevisiae (strain ATCC 204508 / S288c) (Baker's yeast).